A 497-amino-acid polypeptide reads, in one-letter code: Angiopoietin-1 (497 aa).

Residues 1-15 form the signal peptide; sequence MTVFLSFAFLAAILT. Asn92, Asn122, Asn154, Asn243, and Asn294 each carry an N-linked (GlcNAc...) asparagine glycan. Residues 153–261 are a coiled coil; it reads LNQTSRLEIQ…LELMDTVHNL (109 aa). The Fibrinogen C-terminal domain occupies 276–496; sequence KEEEKPFRDC…STTMMIRPLD (221 aa). Intrachain disulfides connect Cys285/Cys314 and Cys438/Cys451.

In terms of assembly, homooligomer. Interacts with TEK/TIE2. Interacts with SVEP1/polydom. Interacts with THBD; this interaction significantly inhibits the generation of activated PC and TAFIa/CPB2 by the thrombin/thrombomodulin complex.

It localises to the secreted. Functionally, binds and activates TIE2 receptor by inducing its tyrosine phosphorylation. Implicated in endothelial developmental processes later and distinct from that of VEGF. Appears to play a crucial role in mediating reciprocal interactions between the endothelium and surrounding matrix and mesenchyme. Mediates blood vessel maturation/stability. It may play an important role in the heart early development. The polypeptide is Angiopoietin-1 (ANGPT1) (Bos taurus (Bovine)).